A 190-amino-acid chain; its full sequence is UPF0301 protein Reut_A0705 (190 aa).

Belongs to the UPF0301 (AlgH) family.

In Cupriavidus pinatubonensis (strain JMP 134 / LMG 1197) (Cupriavidus necator (strain JMP 134)), this protein is UPF0301 protein Reut_A0705.